The primary structure comprises 602 residues: Glutaminase liver isoform, mitochondrial (602 aa).

The transit peptide at 1–14 directs the protein to the mitochondrion; that stretch reads MRSMRALQNALSRA. Disordered stretches follow at residues 1-29 and 45-66; these read MRSM…PSRG and AQGR…ASHS. Substrate is bound at residue S219. K253 is subject to N6-succinyllysine. N268 serves as a coordination point for substrate. N6-acetyllysine occurs at positions 279 and 284. Positions 314 and 321 each coordinate substrate. An N6-acetyllysine modification is found at K329. Residues Y347, Y399, and V417 each coordinate substrate. ANK repeat units lie at residues 518–551 and 552–585; these read DSRT…VKDR and WGNI…SETQ.

This sequence belongs to the glutaminase family. Homotetramer, dimer of dimers. Does not assemble into higher oligomers. Interacts with the PDZ domain of the syntrophin SNTA1. Interacts with the PDZ domain of TAX1BP3.

The protein resides in the mitochondrion. The catalysed reaction is L-glutamine + H2O = L-glutamate + NH4(+). With respect to regulation, enzyme activity is not stimulated by phosphate. Phosphate increases kcat, but decreases substrate affinity, resulting in unchanged enzyme activity. Plays an important role in the regulation of glutamine catabolism. Promotes mitochondrial respiration and increases ATP generation in cells by catalyzing the synthesis of glutamate and alpha-ketoglutarate. Increases cellular anti-oxidant function via NADH and glutathione production. May play a role in preventing tumor proliferation. In Mus musculus (Mouse), this protein is Glutaminase liver isoform, mitochondrial (Gls2).